Here is a 452-residue protein sequence, read N- to C-terminus: Maltoporin (452 aa).

The N-terminal stretch at 1–25 (MMITLRKLPLAVAVAAGVMSAQAMA) is a signal peptide.

The protein belongs to the porin LamB (TC 1.B.3) family. As to quaternary structure, homotrimer formed of three 18-stranded antiparallel beta-barrels, containing three independent channels.

The protein resides in the cell outer membrane. It catalyses the reaction beta-maltose(in) = beta-maltose(out). Involved in the transport of maltose and maltodextrins. This chain is Maltoporin, found in Salmonella agona (strain SL483).